Reading from the N-terminus, the 214-residue chain is Type IV major pilin protein PilE1 (214 aa).

The propeptide at Met1–Gly7 is leader sequence. N-methylphenylalanine is present on Phe8. Residues Phe8 to Leu28 traverse the membrane as a helical segment. The cysteines at positions 127 and 161 are disulfide-linked. The interval Ala182–Glu214 is disordered. Over residues Thr192 to Glu214 the composition is skewed to basic and acidic residues.

The protein belongs to the N-Me-Phe pilin family. In terms of assembly, the pili are polar flexible filaments of about 5.4 nanometers diameter and 2.5 micrometers average length; they consist of only a single polypeptide chain arranged in a helical configuration of five subunits per turn in the assembled pilus.

The protein localises to the fimbrium. It is found in the membrane. In terms of biological role, major component of the type IV pilus (T4P) that plays a role in cellular adherence, microcolony formation, resistance to neutrophil mediated killing, twitching motility as well as transformation. Mediates the attachment and the formation of bacterial microcolonies on host epithelial cells. Mechanistically, pili retractation induces host NF-kappa-B activation in infected cells, which is temporally associated with the formation of gonococcal microcolonies. In Neisseria gonorrhoeae, this protein is Type IV major pilin protein PilE1 (pilE1).